The primary structure comprises 250 residues: MRPGAASIRTTGSVLAFLVPSAQCMRSAPAARFSTSPIRCKKDNNSNRGVSAVRGTGLRKRQTLSVLSKKGSGDQPPKPVPITEKVTGTPDHGLWDFFKDKKLIQTPVDESRHGRAWTVGELRNQDWDALHQLWWVCVKERNRLATEKIERARLDAGYGDQENKDRDTVVQETMKAILDTLSERHQAYMEAVELAKQDPSIDLSRTDGPQFVEPAYEGVTCRVAEYTLESFGHVGVGQHLLSEGWHIVTA.

The transit peptide at 1–24 (MRPGAASIRTTGSVLAFLVPSAQC) directs the protein to the mitochondrion. Residues 66 to 86 (VLSKKGSGDQPPKPVPITEKV) are disordered.

The protein belongs to the universal ribosomal protein uL29 family. As to quaternary structure, component of the mitochondrial large ribosomal subunit. Mature mitochondrial ribosomes consist of a small (37S) and a large (54S) subunit. The 37S subunit contains at least 33 different proteins and 1 molecule of RNA (15S). The 54S subunit contains at least 45 different proteins and 1 molecule of RNA (21S).

Its subcellular location is the mitochondrion. This is Large ribosomal subunit protein uL29m (MRPL4) from Phaeosphaeria nodorum (strain SN15 / ATCC MYA-4574 / FGSC 10173) (Glume blotch fungus).